The primary structure comprises 346 residues: Putative serine/threonine-protein kinase K06H7.1 (346 aa).

The Protein kinase domain occupies 20–287; that stretch reads YKVVQKLGEG…KLFKLLEDVM (268 aa). Residues 26 to 34 and Lys50 each bind ATP; that span reads LGEGGCGSV. The active-site Proton acceptor is Asp141. The segment at 302–326 is disordered; that stretch reads PEKKKNPASQGNKFGLGKKGTKESG.

It belongs to the protein kinase superfamily. Ser/Thr protein kinase family.

The catalysed reaction is L-seryl-[protein] + ATP = O-phospho-L-seryl-[protein] + ADP + H(+). The enzyme catalyses L-threonyl-[protein] + ATP = O-phospho-L-threonyl-[protein] + ADP + H(+). The chain is Putative serine/threonine-protein kinase K06H7.1 from Caenorhabditis elegans.